The primary structure comprises 663 residues: Fructose-1,6-bisphosphatase class 3 1 (663 aa).

It belongs to the FBPase class 3 family. Mn(2+) is required as a cofactor.

It carries out the reaction beta-D-fructose 1,6-bisphosphate + H2O = beta-D-fructose 6-phosphate + phosphate. It functions in the pathway carbohydrate biosynthesis; gluconeogenesis. In Clostridium beijerinckii (strain ATCC 51743 / NCIMB 8052) (Clostridium acetobutylicum), this protein is Fructose-1,6-bisphosphatase class 3 1.